Consider the following 371-residue polypeptide: Diguanylate cyclase A (371 aa).

The GGDEF domain occupies 233–366 (ETLSILMIDI…GRNRVTLSKN (134 aa)). The Mg(2+) site is built by D241, I242, and E284. The Proton acceptor role is filled by E284.

Exists as a homodimer and as larger aggregates. Both dimers and aggregates possess DGC activity. Mg(2+) is required as a cofactor. It depends on Mn(2+) as a cofactor.

It is found in the cytoplasm. The catalysed reaction is 2 GTP = 3',3'-c-di-GMP + 2 diphosphate. Allosterically regulated by a feedback inhibition loop. In terms of biological role, catalyzes the conversion of GTP to cyclic-di-GMP (c-di-GMP). Shows activity under aerobic and anaerobic reaction conditions. This chain is Diguanylate cyclase A, found in Treponema denticola (strain ATCC 35405 / DSM 14222 / CIP 103919 / JCM 8153 / KCTC 15104).